The following is a 968-amino-acid chain: Isoleucine--tRNA ligase (968 aa).

The 'HIGH' region motif lies at 68–78 (PYANGALHMGH). Glu584 lines the L-isoleucyl-5'-AMP pocket. Residues 625–629 (KMSKS) carry the 'KMSKS' region motif. Residue Lys628 participates in ATP binding. Zn(2+)-binding residues include Cys938, Cys941, Cys958, and Cys961.

Belongs to the class-I aminoacyl-tRNA synthetase family. IleS type 1 subfamily. As to quaternary structure, monomer. Zn(2+) serves as cofactor.

It localises to the cytoplasm. It catalyses the reaction tRNA(Ile) + L-isoleucine + ATP = L-isoleucyl-tRNA(Ile) + AMP + diphosphate. Its function is as follows. Catalyzes the attachment of isoleucine to tRNA(Ile). As IleRS can inadvertently accommodate and process structurally similar amino acids such as valine, to avoid such errors it has two additional distinct tRNA(Ile)-dependent editing activities. One activity is designated as 'pretransfer' editing and involves the hydrolysis of activated Val-AMP. The other activity is designated 'posttransfer' editing and involves deacylation of mischarged Val-tRNA(Ile). In Prochlorococcus marinus (strain MIT 9313), this protein is Isoleucine--tRNA ligase.